Consider the following 153-residue polypeptide: Endoribonuclease YbeY (153 aa).

Residues His-118, His-122, and His-128 each coordinate Zn(2+).

The protein belongs to the endoribonuclease YbeY family. The cofactor is Zn(2+).

Its subcellular location is the cytoplasm. In terms of biological role, single strand-specific metallo-endoribonuclease involved in late-stage 70S ribosome quality control and in maturation of the 3' terminus of the 16S rRNA. This Staphylococcus carnosus (strain TM300) protein is Endoribonuclease YbeY.